Reading from the N-terminus, the 110-residue chain is DNA-directed RNA polymerase subunit omega (110 aa).

It belongs to the RNA polymerase subunit omega family. In terms of assembly, the RNAP catalytic core consists of 2 alpha, 1 beta, 1 beta' and 1 omega subunit. When a sigma factor is associated with the core the holoenzyme is formed, which can initiate transcription.

The catalysed reaction is RNA(n) + a ribonucleoside 5'-triphosphate = RNA(n+1) + diphosphate. In terms of biological role, promotes RNA polymerase assembly. Latches the N- and C-terminal regions of the beta' subunit thereby facilitating its interaction with the beta and alpha subunits. This is DNA-directed RNA polymerase subunit omega (rpoZ) from Mycobacterium bovis (strain ATCC BAA-935 / AF2122/97).